We begin with the raw amino-acid sequence, 244 residues long: Small ribosomal subunit protein eS6 (244 aa).

The interval 185–244 is disordered; the sequence is RLQRKRHMRAVKRRRYAKQREEEATYAKLLAKRKKEEREAHAKRRSSARESSLRESKSKA. Basic residues predominate over residues 186-201; that stretch reads LQRKRHMRAVKRRRYA. The span at 231-244 shows a compositional bias: basic and acidic residues; the sequence is SARESSLRESKSKA.

This sequence belongs to the eukaryotic ribosomal protein eS6 family. Post-translationally, ribosomal protein S6 is the major substrate of protein kinases in eukaryote ribosomes.

Component of the 40S small ribosomal subunit. Plays an important role in controlling cell growth and proliferation through the selective translation of particular classes of mRNA. This Branchiostoma floridae (Florida lancelet) protein is Small ribosomal subunit protein eS6 (RPS6).